We begin with the raw amino-acid sequence, 318 residues long: Malate dehydrogenase (318 aa).

NAD(+) contacts are provided by residues 10–15 (GGGQIG) and Asp-34. Residues Arg-83 and Arg-89 each contribute to the substrate site. NAD(+)-binding positions include Asn-96 and 119–121 (ISN). 2 residues coordinate substrate: Asn-121 and Arg-152. His-176 (proton acceptor) is an active-site residue.

Belongs to the LDH/MDH superfamily. MDH type 3 family.

The catalysed reaction is (S)-malate + NAD(+) = oxaloacetate + NADH + H(+). Catalyzes the reversible oxidation of malate to oxaloacetate. This is Malate dehydrogenase from Geotalea daltonii (strain DSM 22248 / JCM 15807 / FRC-32) (Geobacter daltonii).